We begin with the raw amino-acid sequence, 1018 residues long: MGVPSFFRWLSRKYPKIISPVLEEPQQLVDGVALPIDYAGPNPNGELDNLYLDMNGIVHPCSHPENKPPPETEDDMLLAVFEYTNRVLNMARPRKVLVIAVDGVAPRAKMNQQRSRRFRSARDAEIENEAREEIMRQKEQLGQIIDDSVKNKKTWDSNAITPGTPFMDKLAIALRYWTAFKLATDPGWKNLQVIISDATVPGEGEHKIMNFIRSQRADPEYNPNTTHCIYGLDADLIFLGLATHEPHFKILREDVFAQDNRKRNNVKDTIDMTDEEKDLIRKQDSEKPFLWLHISVLREYLSAELWTPKLPFPFDLERAIDDWVFMCFFCGNDFLPHLPCLDVRENSIDILLDIWKSILPRLKTYMTCDGKLNLESVEMVLKELGNREGDIFKTRHIQEIRKKEANERRKQQKQQNVSTGQDRHPTKFNEQLQMYDTNGSLAKGSWNLTTSDMVRYKKELMLANEGDENSIKIIEEVSERNNSLMKEIQSEMTPEDYKGNNNNFTAAELLKKKLNARKRELEKEKENEEQERASKQPKISETPDESDLTEEIEADVIAEVEDETTPDEKDTDSIITEVPEISNGGITSGVIDTDEAVKLFEPGYHDRYYIEKFHIEPNQIPALSKHMVKCYIEGVSWVLMYYYQGCASWTWYYPYHYAPLAEDFVDFHDLDIKFELGEPFLPYEQLMSVLPAASGHNLPEVFRPLMSSEDSEIIDFYPTEFPIDMNGKKMSWQGIALLPFIDETRLLTATRNQYKFLSEDEKRRNTRNDPVLLISNKNVNYEKFAKRLYKKGHEDNFQLVFHHFKSSLAGIVSTDTEGFKLHAKLPCPIQSGALPELSTNLFLKMQYKLLPLPSANKSLILNGFIPSEPMLTQHDFDSIVYKYGTRGFQRNQRNFGMEMKQNIVPVGPSGTTQYKPRIGGYRSFFYFGQLNQQMHQHNQVYQQNQAPTHDRYRNDRSDRGGRGYGRPDHDRGDYRGDYRGDGYRGGHRGGYRGGSRSRGPSSRGISSRGYSGPSRYNR.

Positions 121-147 (ARDAEIENEAREEIMRQKEQLGQIIDD) form a coiled coil. Disordered stretches follow at residues 402 to 424 (KKEA…QDRH), 519 to 549 (RELE…SDLT), and 939 to 1018 (QVYQ…RYNR). Residues 468 to 541 (ENSIKIIEEV…RASKQPKISE (74 aa)) are a coiled coil. Composition is skewed to basic and acidic residues over residues 519-534 (RELE…ERAS) and 948-984 (THDR…DGYR). Low complexity predominate over residues 997–1018 (SRGPSSRGISSRGYSGPSRYNR).

It belongs to the 5'-3' exonuclease family. XRN2/RAT1 subfamily. As to quaternary structure, interacts with RAI1; the interaction is direct, stabilizes RAT1 protein structure and may stimulate its exoribonuclease activity. The interaction also stimulates RAI1 pyrophosphohydrolase activity, probably by recruiting it to mRNA substrates.

It localises to the nucleus. Functionally, possesses 5'-&gt;3' exoribonuclease activity. Required for the processing of nuclear mRNA and rRNA precursors. May promote the termination of transcription by RNA polymerase II. Essential for vegetative cell growth and chromosome segregation. The polypeptide is 5'-3' exoribonuclease 2 (RAT1) (Candida glabrata (strain ATCC 2001 / BCRC 20586 / JCM 3761 / NBRC 0622 / NRRL Y-65 / CBS 138) (Yeast)).